We begin with the raw amino-acid sequence, 108 residues long: uncharacterized protein (108 aa).

Positions 1–15 (MSDSNSRLVYSTQTG) are enriched in polar residues. Residues 1–29 (MSDSNSRLVYSTQTGRIEEPKTAPVRPKG) are disordered. Residues 16–29 (RIEEPKTAPVRPKG) are compositionally biased toward basic and acidic residues.

This sequence belongs to the SUI1 family.

This is an uncharacterized protein from Salmonella typhi.